We begin with the raw amino-acid sequence, 463 residues long: Rubisco accumulation factor 1, chloroplastic (463 aa).

Low complexity predominate over residues 1–18 (MLSLSHPHPHPAASTTAP). Residues 1 to 31 (MLSLSHPHPHPAASTTAPRHQRTAPVWHRRR) constitute a chloroplast transit peptide. A disordered region spans residues 1–84 (MLSLSHPHPH…PFHPPPSPLP (84 aa)). Residues 19–33 (RHQRTAPVWHRRRAS) are compositionally biased toward basic residues. A compositionally biased stretch (gly residues) spans 43–53 (PGGGSTGGRGG). The interval 83–275 (LPPSLRNLDL…SGRARVELEL (193 aa)) is N-terminal alpha-helix. Residues 240–294 (RQSREAIDVQDRVAELERALQVVETESGRARVELELERARRKAAGEEEVDEEGEE) are a coiled coil. A C-terminal beta sheet region spans residues 305-450 (VTVVRLRYGE…AEVVIVVRPP (146 aa)).

The protein belongs to the RAF family. Homotrimer. In terms of tissue distribution, expressed in bundle sheath.

The protein localises to the plastid. Its subcellular location is the chloroplast. Functionally, required for assembly or stability of RuBisCO. Acts at a postchaperonin step to fold and/or assemble the large subunit (LS) into RuBisCO. This Zea mays (Maize) protein is Rubisco accumulation factor 1, chloroplastic.